Reading from the N-terminus, the 74-residue chain is Large ribosomal subunit protein bL31 (74 aa).

Zn(2+) is bound by residues cysteine 16, cysteine 18, cysteine 38, and cysteine 41.

It belongs to the bacterial ribosomal protein bL31 family. Type A subfamily. In terms of assembly, part of the 50S ribosomal subunit. Requires Zn(2+) as cofactor.

Functionally, binds the 23S rRNA. The protein is Large ribosomal subunit protein bL31 of Acinetobacter baylyi (strain ATCC 33305 / BD413 / ADP1).